Reading from the N-terminus, the 525-residue chain is GMP synthase [glutamine-hydrolyzing] (525 aa).

The region spanning 8-207 (KILILDFGSQ…AVAICGCGTN (200 aa)) is the Glutamine amidotransferase type-1 domain. Cysteine 85 acts as the Nucleophile in catalysis. Catalysis depends on residues histidine 181 and glutamate 183. One can recognise a GMPS ATP-PPase domain in the interval 208 to 400 (WKPSSIIEDA…LGLPYNMLYR (193 aa)). 235–241 (SGGVDSS) serves as a coordination point for ATP.

As to quaternary structure, homodimer.

The enzyme catalyses XMP + L-glutamine + ATP + H2O = GMP + L-glutamate + AMP + diphosphate + 2 H(+). The protein operates within purine metabolism; GMP biosynthesis; GMP from XMP (L-Gln route): step 1/1. Its function is as follows. Catalyzes the synthesis of GMP from XMP. This chain is GMP synthase [glutamine-hydrolyzing], found in Shewanella denitrificans (strain OS217 / ATCC BAA-1090 / DSM 15013).